A 175-amino-acid chain; its full sequence is CASP-like protein 2C1 (175 aa).

Residues 1–7 (MVRLRET) lie on the Cytoplasmic side of the membrane. The helical transmembrane segment at 8 to 28 (EVILRLCIVFFILLSSCLIGL) threads the bilayer. The Extracellular segment spans residues 29–51 (DSQTKEIAYIHKKVSFRYLLALE). The chain crosses the membrane as a helical span at residues 52 to 72 (AELYINVVVAAYNLVQIGLGW). Topologically, residues 73–91 (YNVEQKTSNPKWFSYLLDQ) are cytoplasmic. A helical membrane pass occupies residues 92–112 (TAAYVVFAGTSAAAQHSLLVV). Topologically, residues 113 to 136 (TGSRELQWMKWCYKFTRFCFQMGS) are extracellular. The chain crosses the membrane as a helical span at residues 137-157 (AIILNYIAAALMVLLSSISAF). Residues 158-175 (NLFRLYSPKRFFSFKSSS) lie on the Cytoplasmic side of the membrane.

Belongs to the Casparian strip membrane proteins (CASP) family. In terms of assembly, homodimer and heterodimers.

The protein resides in the cell membrane. This chain is CASP-like protein 2C1, found in Arabidopsis lyrata subsp. lyrata (Lyre-leaved rock-cress).